Here is a 432-residue protein sequence, read N- to C-terminus: Glutamate-1-semialdehyde 2,1-aminomutase 1 (432 aa).

At lysine 268 the chain carries N6-(pyridoxal phosphate)lysine.

Belongs to the class-III pyridoxal-phosphate-dependent aminotransferase family. HemL subfamily. Homodimer. Pyridoxal 5'-phosphate serves as cofactor.

The protein localises to the cytoplasm. The catalysed reaction is (S)-4-amino-5-oxopentanoate = 5-aminolevulinate. Its pathway is porphyrin-containing compound metabolism; protoporphyrin-IX biosynthesis; 5-aminolevulinate from L-glutamyl-tRNA(Glu): step 2/2. The chain is Glutamate-1-semialdehyde 2,1-aminomutase 1 from Bacillus mycoides (strain KBAB4) (Bacillus weihenstephanensis).